Consider the following 270-residue polypeptide: 4-hydroxy-tetrahydrodipicolinate reductase (270 aa).

Residues 9-14 (GAGGRM) and E35 each bind NAD(+). R36 provides a ligand contact to NADP(+). NAD(+) contacts are provided by residues 99–101 (GTT) and 123–126 (ASNY). Catalysis depends on H156, which acts as the Proton donor/acceptor. H157 is a (S)-2,3,4,5-tetrahydrodipicolinate binding site. K160 functions as the Proton donor in the catalytic mechanism. Position 166-167 (166-167 (GT)) interacts with (S)-2,3,4,5-tetrahydrodipicolinate.

The protein belongs to the DapB family.

It is found in the cytoplasm. The catalysed reaction is (S)-2,3,4,5-tetrahydrodipicolinate + NAD(+) + H2O = (2S,4S)-4-hydroxy-2,3,4,5-tetrahydrodipicolinate + NADH + H(+). The enzyme catalyses (S)-2,3,4,5-tetrahydrodipicolinate + NADP(+) + H2O = (2S,4S)-4-hydroxy-2,3,4,5-tetrahydrodipicolinate + NADPH + H(+). It participates in amino-acid biosynthesis; L-lysine biosynthesis via DAP pathway; (S)-tetrahydrodipicolinate from L-aspartate: step 4/4. Functionally, catalyzes the conversion of 4-hydroxy-tetrahydrodipicolinate (HTPA) to tetrahydrodipicolinate. In Mannheimia succiniciproducens (strain KCTC 0769BP / MBEL55E), this protein is 4-hydroxy-tetrahydrodipicolinate reductase.